The sequence spans 324 residues: tRNA N6-adenosine threonylcarbamoyltransferase (324 aa).

His-107, His-111, and Tyr-127 together coordinate Fe cation. Substrate contacts are provided by residues 127–131, Asp-159, Gly-172, Glu-176, and Asn-257; that span reads YVSGG. Asp-285 contributes to the Fe cation binding site.

This sequence belongs to the KAE1 / TsaD family. In terms of assembly, monomer. Component of the KEOPS complex that consists of Kae1, Bud32, Cgi121 and Pcc1; the whole complex dimerizes. Requires Fe(2+) as cofactor.

The protein resides in the cytoplasm. The catalysed reaction is L-threonylcarbamoyladenylate + adenosine(37) in tRNA = N(6)-L-threonylcarbamoyladenosine(37) in tRNA + AMP + H(+). Functionally, required for the formation of a threonylcarbamoyl group on adenosine at position 37 (t(6)A37) in tRNAs that read codons beginning with adenine. Is a component of the KEOPS complex that is probably involved in the transfer of the threonylcarbamoyl moiety of threonylcarbamoyl-AMP (TC-AMP) to the N6 group of A37. Kae1 likely plays a direct catalytic role in this reaction, but requires other protein(s) of the complex to fulfill this activity. This chain is tRNA N6-adenosine threonylcarbamoyltransferase, found in Pyrococcus horikoshii (strain ATCC 700860 / DSM 12428 / JCM 9974 / NBRC 100139 / OT-3).